Reading from the N-terminus, the 161-residue chain is Peroxynitrite isomerase (161 aa).

The short motif at 17 to 23 (GSWVGRG) is the GXWXGXG element. Histidine 152 is a heme b binding site.

This sequence belongs to the nitrobindin family. In terms of assembly, homodimer. The cofactor is heme b.

The catalysed reaction is peroxynitrite = nitrate. It functions in the pathway nitrogen metabolism. Functionally, heme-binding protein able to scavenge peroxynitrite and to protect free L-tyrosine against peroxynitrite-mediated nitration, by acting as a peroxynitrite isomerase that converts peroxynitrite to nitrate. Therefore, this protein likely plays a role in peroxynitrite sensing and in the detoxification of reactive nitrogen and oxygen species (RNS and ROS, respectively). Is able to bind nitric oxide (NO) in vitro, but may act as a sensor of peroxynitrite levels in vivo. The chain is Peroxynitrite isomerase from Mycobacterium leprae (strain TN).